The following is a 41-amino-acid chain: M-factor (41 aa).

The interval 1–25 is disordered; the sequence is MDSMANTVSSSVVNTGNKPSETLNK. Residues 1 to 29 constitute a propeptide that is removed on maturation; the sequence is MDSMANTVSSSVVNTGNKPSETLNKTVKN. The residue at position 38 (C38) is a Cysteine methyl ester. C38 carries the S-farnesyl cysteine lipid modification. A propeptide spans 39-41 (removed in mature form); that stretch reads VIA.

It localises to the secreted. Functionally, M-factor is a mating pheromone produced by M-type mating cells. All three mfm genes contribute to the production of M-factor. The polypeptide is M-factor (mfm3) (Schizosaccharomyces pombe (strain 972 / ATCC 24843) (Fission yeast)).